The following is an 83-amino-acid chain: UPF0298 protein SERP0712 (83 aa).

This sequence belongs to the UPF0298 family.

It is found in the cytoplasm. The polypeptide is UPF0298 protein SERP0712 (Staphylococcus epidermidis (strain ATCC 35984 / DSM 28319 / BCRC 17069 / CCUG 31568 / BM 3577 / RP62A)).